Here is a 1038-residue protein sequence, read N- to C-terminus: Ribosome quality control complex subunit 2 (1038 aa).

A coiled-coil region spans residues 350–383; sequence ALRIQNQESQAQKKIDDARAENDRKIQALLDVQE. Disordered stretches follow at residues 459–499, 708–824, and 877–898; these read LNTS…MKRK, KTSG…DEPG, and QRKK…KREK. Positions 713-768 form a coiled coil; that stretch reads EDNGDDDEEEEEEEEEEEEEEEEEEEEEEEEKEEEEKEEEQQQDEDDSNEVNGLEK. Acidic residues predominate over residues 714-761; the sequence is DNGDDDEEEEEEEEEEEEEEEEEEEEEEEEKEEEEKEEEQQQDEDDSN. The span at 780-794 shows a compositional bias: basic and acidic residues; that stretch reads SFEHDNLEKDIEKHC. The segment covering 795 to 805 has biased composition (polar residues); it reads TISSDTDSDSG. S797 is modified (phosphoserine). A coiled-coil region spans residues 830-912; that stretch reads IENINSNVRG…QALKFTKKEK (83 aa). Basic and acidic residues predominate over residues 877–894; the sequence is QRKKEEIMKREVREDRKN.

It belongs to the NEMF family. Component of the ribosome quality control complex (RQC), composed of the E3 ubiquitin ligase RKR1/LTN1, RQC1 and RQC2, as well as CDC48 and its ubiquitin-binding cofactors associated with the 60S ribosomal subunit. RQC2 binds to the 40S-binding surface of tRNAs.

The protein resides in the cytoplasm. Key component of the ribosome quality control complex (RQC), a ribosome-associated complex that mediates the extraction of incompletely synthesized nascent chains from stalled ribosomes as well as their ubiquitin-mediated proteasomal degradation. Thereby, frees 60S subunit ribosomes from the stalled translation complex and prevents the accumulation of nascent polypeptide chains that are potentially toxic for the cell. Within the RQC complex, RQC2 specifically binds stalled 60S ribosomal subunits by recognizing an exposed, nascent chain-conjugated tRNA moiety and promotes the recruitment of RKR1/LTN1 to stalled 60S subunits. Following binding to stalled 60S ribosomal subunits, RQC2 mediates CAT tailing by recruiting alanine- and threonine-charged tRNA to the A-site and directing the elongation of stalled nascent chains independently of mRNA or 40S subunits, leading to non-templated C-terminal Ala and Thr extensions (CAT tails). CAT tails promote the RKR1/LTN1-mediated ubiquitination of incompletely synthesized nascent polypeptides: CAT tailing facilitates RKR1/LTN1-dependent ubiquitination by exposing lysine residues that would otherwise remain buried in the ribosomal exit tunnel. Following ubiquitination, incompletely synthesized nascent polypeptides are recognized by CDC48 and degraded by the proteasome. CAT-tailed proteins tend to aggregate and sequester chaperones and can induce proteotoxic stress; their RKR1/LTN1-dependent ubiquitination and degradation is required to prevent proteotoxic stress. The protein is Ribosome quality control complex subunit 2 of Saccharomyces cerevisiae (strain ATCC 204508 / S288c) (Baker's yeast).